The following is a 309-amino-acid chain: Pyrroline-5-carboxylate reductase 1, mitochondrial (309 aa).

At Ser2 the chain carries N-acetylserine. NADP(+) contacts are provided by residues 6 to 11 (IGAGQL) and Ser34. Residues Ala8, Gln10, Leu11, Ser34, Asp36, Asn56, Val70, Lys71, and Ala97 each contribute to the NADPH site. Residues Asn56, 69–72 (AVKP), and 95–97 (CAA) each bind NADP(+). Glu164 serves as a coordination point for L-proline. Asn230 serves as a coordination point for NADPH. Ala237 and Thr238 together coordinate L-proline. 2 positions are modified to phosphoserine: Ser278 and Ser301.

The protein belongs to the pyrroline-5-carboxylate reductase family. Homodecamer; composed of 5 homodimers. Interacts with LTO1. Highly expressed in osteoblasts and skin.

It localises to the mitochondrion. It catalyses the reaction L-proline + NADP(+) = (S)-1-pyrroline-5-carboxylate + NADPH + 2 H(+). The catalysed reaction is L-proline + NAD(+) = (S)-1-pyrroline-5-carboxylate + NADH + 2 H(+). Its pathway is amino-acid biosynthesis; L-proline biosynthesis; L-proline from L-glutamate 5-semialdehyde: step 1/1. In terms of biological role, oxidoreductase that catalyzes the last step in proline biosynthesis, which corresponds to the reduction of pyrroline-5-carboxylate to L-proline using NAD(P)H. At physiologic concentrations, has higher specific activity in the presence of NADH. Involved in the cellular response to oxidative stress. This is Pyrroline-5-carboxylate reductase 1, mitochondrial from Mus musculus (Mouse).